A 672-amino-acid chain; its full sequence is Threonine--tRNA ligase (672 aa).

The TGS domain maps to 1–64 (MTELLKISLP…EGDAELALIT (64 aa)). The segment at 257–566 (DHRKLGREMD…LIEHFAGRLP (310 aa)) is catalytic. Residues Cys-362, His-413, and His-543 each coordinate Zn(2+).

It belongs to the class-II aminoacyl-tRNA synthetase family. In terms of assembly, homodimer. It depends on Zn(2+) as a cofactor.

The protein localises to the cytoplasm. It catalyses the reaction tRNA(Thr) + L-threonine + ATP = L-threonyl-tRNA(Thr) + AMP + diphosphate + H(+). Catalyzes the attachment of threonine to tRNA(Thr) in a two-step reaction: L-threonine is first activated by ATP to form Thr-AMP and then transferred to the acceptor end of tRNA(Thr). Also edits incorrectly charged L-seryl-tRNA(Thr). The sequence is that of Threonine--tRNA ligase from Erythrobacter litoralis (strain HTCC2594).